Reading from the N-terminus, the 516-residue chain is MAPFALLSVSDKNGVVALAEALHRTHGYALLSSGGTAKVLEDAGLPVTRMSEHNGAPEILGGRVKTLHPRVHGGILAKRGDAAHQADLEQQGIPAIDLVVVNLYPFRETVARADVTWDQAIENIDIGGPAMVRAAAKNHADVAVLTSPDQYSSVLAAMAESAGRVPADLCRQLALEAFQHTAAYDTAISRWMAGEVELVSSPWLEAVPLRQTLRYGENPHQKARWFSHPRQGWGGAIQLQGKELSTNNLLDLEAALATVREFGYGPNAVGPAAVVVKHTNPCGVAVGPVVASALTRALDADRVSAFGGIVAINGPVEAAAARELTGLFLECVVAPSFSPEAREILAAKANLRLLELSPDAIAAAGPDHVRSILGGLLVQDLDDQVMTPDQWTLATKRPPTAQEKQDLEFAWRLVRHVRSNAIVVARDGQSLGVGAGQMNRVGSARIALEAAAEKAKGAVLASDGFFPFDDTVRLAASHGITAVIHPGGSLRDGESVKACDELGLAMLLTGRRHFLH.

The region spanning 1–146 (MAPFALLSVS…KNHADVAVLT (146 aa)) is the MGS-like domain.

This sequence belongs to the PurH family.

The enzyme catalyses (6R)-10-formyltetrahydrofolate + 5-amino-1-(5-phospho-beta-D-ribosyl)imidazole-4-carboxamide = 5-formamido-1-(5-phospho-D-ribosyl)imidazole-4-carboxamide + (6S)-5,6,7,8-tetrahydrofolate. It catalyses the reaction IMP + H2O = 5-formamido-1-(5-phospho-D-ribosyl)imidazole-4-carboxamide. Its pathway is purine metabolism; IMP biosynthesis via de novo pathway; 5-formamido-1-(5-phospho-D-ribosyl)imidazole-4-carboxamide from 5-amino-1-(5-phospho-D-ribosyl)imidazole-4-carboxamide (10-formyl THF route): step 1/1. The protein operates within purine metabolism; IMP biosynthesis via de novo pathway; IMP from 5-formamido-1-(5-phospho-D-ribosyl)imidazole-4-carboxamide: step 1/1. The sequence is that of Bifunctional purine biosynthesis protein PurH from Parasynechococcus marenigrum (strain WH8102).